The chain runs to 172 residues: RNA pyrophosphohydrolase (172 aa).

Residues 6–149 enclose the Nudix hydrolase domain; that stretch reads GYRLNVGIVI…KRDVYRRAMK (144 aa). Positions 38-59 match the Nudix box motif; sequence GGIDEGETPEQAMYRELYEEVG.

Belongs to the Nudix hydrolase family. RppH subfamily. It depends on a divalent metal cation as a cofactor.

Accelerates the degradation of transcripts by removing pyrophosphate from the 5'-end of triphosphorylated RNA, leading to a more labile monophosphorylated state that can stimulate subsequent ribonuclease cleavage. This is RNA pyrophosphohydrolase from Vibrio atlanticus (strain LGP32) (Vibrio splendidus (strain Mel32)).